We begin with the raw amino-acid sequence, 406 residues long: Probable tRNA sulfurtransferase (406 aa).

Positions 60 to 162 constitute a THUMP domain; that stretch reads PEAKARLQDT…PGAALLEVER (103 aa). Residues 180–181, 205–206, Arg-262, Gly-284, and Gln-293 contribute to the ATP site; these read LL and HF.

Belongs to the ThiI family.

The protein resides in the cytoplasm. It carries out the reaction [ThiI sulfur-carrier protein]-S-sulfanyl-L-cysteine + a uridine in tRNA + 2 reduced [2Fe-2S]-[ferredoxin] + ATP + H(+) = [ThiI sulfur-carrier protein]-L-cysteine + a 4-thiouridine in tRNA + 2 oxidized [2Fe-2S]-[ferredoxin] + AMP + diphosphate. The catalysed reaction is [ThiS sulfur-carrier protein]-C-terminal Gly-Gly-AMP + S-sulfanyl-L-cysteinyl-[cysteine desulfurase] + AH2 = [ThiS sulfur-carrier protein]-C-terminal-Gly-aminoethanethioate + L-cysteinyl-[cysteine desulfurase] + A + AMP + 2 H(+). It functions in the pathway cofactor biosynthesis; thiamine diphosphate biosynthesis. Catalyzes the ATP-dependent transfer of a sulfur to tRNA to produce 4-thiouridine in position 8 of tRNAs, which functions as a near-UV photosensor. Also catalyzes the transfer of sulfur to the sulfur carrier protein ThiS, forming ThiS-thiocarboxylate. This is a step in the synthesis of thiazole, in the thiamine biosynthesis pathway. The sulfur is donated as persulfide by IscS. The sequence is that of Probable tRNA sulfurtransferase from Thermus thermophilus (strain ATCC 27634 / DSM 579 / HB8).